Reading from the N-terminus, the 297-residue chain is 33 kDa chaperonin (297 aa).

2 cysteine pairs are disulfide-bonded: cysteine 233–cysteine 235 and cysteine 267–cysteine 270.

Belongs to the HSP33 family. In terms of processing, under oxidizing conditions two disulfide bonds are formed involving the reactive cysteines. Under reducing conditions zinc is bound to the reactive cysteines and the protein is inactive.

Its subcellular location is the cytoplasm. In terms of biological role, redox regulated molecular chaperone. Protects both thermally unfolding and oxidatively damaged proteins from irreversible aggregation. Plays an important role in the bacterial defense system toward oxidative stress. This chain is 33 kDa chaperonin, found in Haemophilus ducreyi (strain 35000HP / ATCC 700724).